A 137-amino-acid polypeptide reads, in one-letter code: Small ribosomal subunit protein uS12 (137 aa).

Residues 1–57 (MPTINQLVRKPRKSKVEKSKSPALNVGYNSRKKVQTNVSSPQKRGVATRVGTMTPKK) form a disordered region. Asp-102 bears the 3-methylthioaspartic acid mark.

The protein belongs to the universal ribosomal protein uS12 family. As to quaternary structure, part of the 30S ribosomal subunit. Contacts proteins S8 and S17. May interact with IF1 in the 30S initiation complex.

With S4 and S5 plays an important role in translational accuracy. Functionally, interacts with and stabilizes bases of the 16S rRNA that are involved in tRNA selection in the A site and with the mRNA backbone. Located at the interface of the 30S and 50S subunits, it traverses the body of the 30S subunit contacting proteins on the other side and probably holding the rRNA structure together. The combined cluster of proteins S8, S12 and S17 appears to hold together the shoulder and platform of the 30S subunit. The protein is Small ribosomal subunit protein uS12 of Streptococcus suis (strain 98HAH33).